The primary structure comprises 801 residues: Ferredoxin:CoB-CoM heterodisulfide reductase subunit A (801 aa).

Residue 149 to 172 (GGGIAGITAALNLADNGVSTVLVE) participates in FAD binding. 2 4Fe-4S ferredoxin-type domains span residues 239-269 (KKPR…FNCG) and 285-320 (PKIY…FSQK). [4Fe-4S] cluster is bound by residues C248, C251, C254, C258, C295, C303, C306, and C310. Positions 382–409 (FSKASSDPTPATCDSRCEDSSDESQGTD) are disordered. 2 4Fe-4S ferredoxin-type domains span residues 606 to 634 (EIAT…VNES) and 635 to 664 (GRVV…IAGF). [4Fe-4S] cluster contacts are provided by C615, C618, C621, C624, C644, C647, C650, and C654.

The protein belongs to the HdrA family. In terms of assembly, the ferredoxin:CoB-CoM heterodisulfide reductase is composed of three subunits; HdrA1, HdrB1 and HdrC1. It depends on [4Fe-4S] cluster as a cofactor. The cofactor is FAD.

The protein localises to the cytoplasm. It catalyses the reaction coenzyme B + coenzyme M + 2 oxidized [2Fe-2S]-[ferredoxin] = coenzyme M-coenzyme B heterodisulfide + 2 reduced [2Fe-2S]-[ferredoxin] + 2 H(+). It participates in cofactor metabolism; coenzyme M-coenzyme B heterodisulfide reduction; coenzyme B and coenzyme M from coenzyme M-coenzyme B heterodisulfide: step 1/1. Its function is as follows. Part of a complex that catalyzes the reversible reduction of CoM-S-S-CoB to the thiol-coenzymes H-S-CoM (coenzyme M) and H-S-CoB (coenzyme B). Probably involved in methylotrophic methanogenesis but not in aceticlastic methanogenesis. The chain is Ferredoxin:CoB-CoM heterodisulfide reductase subunit A from Methanosarcina acetivorans (strain ATCC 35395 / DSM 2834 / JCM 12185 / C2A).